The chain runs to 426 residues: Histidine--tRNA ligase (426 aa).

Belongs to the class-II aminoacyl-tRNA synthetase family.

It is found in the cytoplasm. It carries out the reaction tRNA(His) + L-histidine + ATP = L-histidyl-tRNA(His) + AMP + diphosphate + H(+). The chain is Histidine--tRNA ligase from Sulfurisphaera tokodaii (strain DSM 16993 / JCM 10545 / NBRC 100140 / 7) (Sulfolobus tokodaii).